The sequence spans 334 residues: S-adenosylmethionine:tRNA ribosyltransferase-isomerase (334 aa).

This sequence belongs to the QueA family. In terms of assembly, monomer.

The protein resides in the cytoplasm. The enzyme catalyses 7-aminomethyl-7-carbaguanosine(34) in tRNA + S-adenosyl-L-methionine = epoxyqueuosine(34) in tRNA + adenine + L-methionine + 2 H(+). It participates in tRNA modification; tRNA-queuosine biosynthesis. Transfers and isomerizes the ribose moiety from AdoMet to the 7-aminomethyl group of 7-deazaguanine (preQ1-tRNA) to give epoxyqueuosine (oQ-tRNA). In Thermosipho melanesiensis (strain DSM 12029 / CIP 104789 / BI429), this protein is S-adenosylmethionine:tRNA ribosyltransferase-isomerase.